Reading from the N-terminus, the 503-residue chain is Maturase K (503 aa).

It belongs to the intron maturase 2 family. MatK subfamily.

It localises to the plastid. The protein localises to the chloroplast. Functionally, usually encoded in the trnK tRNA gene intron. Probably assists in splicing its own and other chloroplast group II introns. The polypeptide is Maturase K (Lathyrus vestitus (Pacific pea)).